The chain runs to 731 residues: 1,4-alpha-glucan branching enzyme GlgB (731 aa).

The active-site Nucleophile is the aspartate 408. The active-site Proton donor is glutamate 461.

It belongs to the glycosyl hydrolase 13 family. GlgB subfamily. In terms of assembly, monomer.

The enzyme catalyses Transfers a segment of a (1-&gt;4)-alpha-D-glucan chain to a primary hydroxy group in a similar glucan chain.. The protein operates within glycan biosynthesis; glycogen biosynthesis. Its function is as follows. Catalyzes the formation of the alpha-1,6-glucosidic linkages in glycogen by scission of a 1,4-alpha-linked oligosaccharide from growing alpha-1,4-glucan chains and the subsequent attachment of the oligosaccharide to the alpha-1,6 position. The sequence is that of 1,4-alpha-glucan branching enzyme GlgB from Corynebacterium efficiens (strain DSM 44549 / YS-314 / AJ 12310 / JCM 11189 / NBRC 100395).